The primary structure comprises 806 residues: Transitional endoplasmic reticulum ATPase (806 aa).

Ala-2 is subject to N-acetylalanine. Phosphoserine is present on residues Ser-3 and Ser-7. Lys-8 participates in a covalent cross-link: Glycyl lysine isopeptide (Lys-Gly) (interchain with G-Cter in SUMO2). Ser-13 is modified (phosphoserine). Lys-18 is covalently cross-linked (Glycyl lysine isopeptide (Lys-Gly) (interchain with G-Cter in SUMO2)). Ser-37 is subject to Phosphoserine. 247-253 (PGTGKTL) contacts ATP. N6,N6,N6-trimethyllysine; by VCPKMT is present on Lys-315. Positions 348 and 384 each coordinate ATP. A Phosphothreonine modification is found at Thr-436. Ser-462 carries the phosphoserine modification. Lys-502 and Lys-505 each carry N6-acetyllysine. Residue 521–526 (GCGKTL) participates in ATP binding. The residue at position 668 (Lys-668) is an N6-acetyllysine; alternate. Lys-668 bears the N6-succinyllysine; alternate mark. Phosphoserine is present on Ser-702. The segment at 708 to 727 (RRERERQTNPSAMEVEEDDP) is disordered. Lys-754 bears the N6-acetyllysine mark. The disordered stretch occupies residues 768–806 (FGSFRFPSGNQGGAGPSQGSGGGTGGSVYTEDNDDDLYG). 3 positions are modified to phosphoserine: Ser-770, Ser-775, and Ser-787. Positions 777–793 (NQGGAGPSQGSGGGTGG) are enriched in gly residues. Positions 797-806 (TEDNDDDLYG) are interaction with UBXN6. The short motif at 802 to 806 (DDLYG) is the PIM motif element. At Tyr-805 the chain carries Phosphotyrosine.

This sequence belongs to the AAA ATPase family. Homohexamer. Forms a ring-shaped particle of 12.5 nm diameter, that displays 6-fold radial symmetry. Part of a ternary complex containing STX5A, NSFL1C and VCP. NSFL1C forms a homotrimer that binds to one end of a VCP homohexamer. The complex binds to membranes enriched in phosphatidylethanolamine-containing lipids and promotes Golgi membrane fusion. Binds to a heterodimer of NPLOC4 and UFD1, binding to this heterodimer inhibits Golgi-membrane fusion. Interaction with VCIP135 leads to dissociation of the complex via ATP hydrolysis by VCP. Part of a ternary complex containing NPLOC4, UFD1 and VCP. Interacts with NSFL1C-like protein p37; the complex has membrane fusion activity and is required for Golgi and endoplasmic reticulum biogenesis. Interacts with SELENOS and SYVN1, as well as with DERL1 (via SHP-box motif), DERL2 and DERL3; which probably transfer misfolded proteins from the ER to VCP. Interacts with SVIP and forms a complex with SVIP and DERL1. Component of a complex required to couple retrotranslocation, ubiquitination and deglycosylation composed of NGLY1, SAKS1, AMFR, VCP and RAD23B. Part of a complex composed of STUB1/CHIP, VCP/p97, CHRNA3, and UBXN2A that modulates the ubiquitination and endoplasmic reticulum-associated degradation (ERAD) of CHRNA3. Within the complex UBXN2A acts as a scaffold protein required for the interaction of CHRNA3 with VCP/p97, this interaction also inhibits CHRNA3 ubiquitination by STUB1/CHIP and subsequently ERAD. Interacts with UBXN2A (via UBX domain); the interaction is required for the interaction of CHRNA3 in the STUB1-VCP-UBXN2A complex. Directly interacts with UBXN4 and RNF19A. Interacts with CASR. Interacts with UBE4B and YOD1. Interacts with clathrin. Interacts with RNF103. Interacts with TRIM13 and TRIM21. Component of a VCP/p97-AMFR/gp78 complex that participates in the final step of the endoplasmic reticulum-associated degradation (ERAD) of HMGCR. Interacts directly with AMFR/gp78 (via its VIM). Interacts with RHBDD1 (via C-terminal domain). Interacts with SPRTN; leading to recruitment to stalled replication forks. Interacts with WASHC5. Interacts with UBOX5. Interacts (via N-terminus) with UBXN7, UBXN8, and probably several other UBX domain-containing proteins (via UBX domains); the interactions are mutually exclusive with VIM-dependent interactions such as those with AMFR and SELENOS. Forms a complex with UBQLN1 and UBXN4. Interacts (via the PIM motif) with RNF31 (via the PUB domain). Interacts with RIGI and RNF125; interaction takes place when RIGI is ubiquitinated via 'Lys-63'-linked ubiquitin on its CARD domains, leading to recruit RNF125 and promote ubiquitination and degradation of RIGI. Interacts with BAG6. Interacts with UBXN10. Interacts with UBXN6; the interaction with UBXN6 is direct and competitive with UFD1. Forms a ternary complex with CAV1 and UBXN6. Interacts with PLAA, UBXN6 and YOD1; may form a complex involved in macroautophagy. Interacts with ANKZF1. Interacts with ubiquitin-binding protein FAF1. Interacts with ZFAND2B (via VIM motif); the interaction is direct. Interacts with ZFAND1 (via its ubiquitin-like region); this interaction occurs in an arsenite-dependent manner. Interacts with CCDC47. Interacts with UBAC2. Interacts with LMBR1L. Interacts with ATXN3. Interacts with TEX264; bridging VCP to covalent DNA-protein cross-links (DPCs). Interacts with FBXL4. In terms of processing, phosphorylated by tyrosine kinases in response to T-cell antigen receptor activation. Phosphorylated in mitotic cells. Post-translationally, ISGylated. Methylation at Lys-315 catalyzed by VCPKMT is increased in the presence of ASPSCR1. Lys-315 methylation may decrease ATPase activity.

It is found in the cytoplasm. It localises to the cytosol. The protein resides in the endoplasmic reticulum. Its subcellular location is the nucleus. The protein localises to the stress granule. The enzyme catalyses ATP + H2O = ADP + phosphate + H(+). Necessary for the fragmentation of Golgi stacks during mitosis and for their reassembly after mitosis. Involved in the formation of the transitional endoplasmic reticulum (tER). The transfer of membranes from the endoplasmic reticulum to the Golgi apparatus occurs via 50-70 nm transition vesicles which derive from part-rough, part-smooth transitional elements of the endoplasmic reticulum (tER). Vesicle budding from the tER is an ATP-dependent process. The ternary complex containing UFD1, VCP and NPLOC4 binds ubiquitinated proteins and is necessary for the export of misfolded proteins from the ER to the cytoplasm, where they are degraded by the proteasome. The NPLOC4-UFD1-VCP complex regulates spindle disassembly at the end of mitosis and is necessary for the formation of a closed nuclear envelope. Regulates E3 ubiquitin-protein ligase activity of RNF19A. Component of the VCP/p97-AMFR/gp78 complex that participates in the final step of the sterol-mediated ubiquitination and endoplasmic reticulum-associated degradation (ERAD) of HMGCR. Mediates the endoplasmic reticulum-associated degradation of CHRNA3 in cortical neurons as part of the STUB1-VCP-UBXN2A complex. Involved in endoplasmic reticulum stress-induced pre-emptive quality control, a mechanism that selectively attenuates the translocation of newly synthesized proteins into the endoplasmic reticulum and reroutes them to the cytosol for proteasomal degradation. Involved in clearance process by mediating G3BP1 extraction from stress granules. Also involved in DNA damage response: recruited to double-strand breaks (DSBs) sites in a RNF8- and RNF168-dependent manner and promotes the recruitment of TP53BP1 at DNA damage sites. Recruited to stalled replication forks by SPRTN: may act by mediating extraction of DNA polymerase eta (POLH) to prevent excessive translesion DNA synthesis and limit the incidence of mutations induced by DNA damage. Together with SPRTN metalloprotease, involved in the repair of covalent DNA-protein cross-links (DPCs) during DNA synthesis. Involved in interstrand cross-link repair in response to replication stress by mediating unloading of the ubiquitinated CMG helicase complex. Mediates extraction of PARP1 trapped to chromatin: recognizes and binds ubiquitinated PARP1 and promotes its removal. Required for cytoplasmic retrotranslocation of stressed/damaged mitochondrial outer-membrane proteins and their subsequent proteasomal degradation. Essential for the maturation of ubiquitin-containing autophagosomes and the clearance of ubiquitinated protein by autophagy. Acts as a negative regulator of type I interferon production by interacting with RIGI: interaction takes place when RIGI is ubiquitinated via 'Lys-63'-linked ubiquitin on its CARD domains, leading to recruit RNF125 and promote ubiquitination and degradation of RIGI. May play a role in the ubiquitin-dependent sorting of membrane proteins to lysosomes where they undergo degradation. May more particularly play a role in caveolins sorting in cells. By controlling the steady-state expression of the IGF1R receptor, indirectly regulates the insulin-like growth factor receptor signaling pathway. This Homo sapiens (Human) protein is Transitional endoplasmic reticulum ATPase (VCP).